Reading from the N-terminus, the 243-residue chain is Adenylate dimethylallyltransferase (243 aa).

It catalyses the reaction dimethylallyl diphosphate + AMP = N(6)-(dimethylallyl)adenosine 5'-phosphate + diphosphate. In terms of biological role, transfers dimethylallyl groups to AMP as part of the biosynthesis of cytokinin phytohormones. The polypeptide is Adenylate dimethylallyltransferase (tzs) (Agrobacterium tumefaciens (strain T37)).